We begin with the raw amino-acid sequence, 375 residues long: tRNA-specific 2-thiouridylase MnmA (375 aa).

Residues 9 to 16 (AMSGGVDS) and Leu35 each bind ATP. Cys105 serves as the catalytic Nucleophile. Cys105 and Cys201 form a disulfide bridge. Position 129 (Gly129) interacts with ATP. The tract at residues 151–153 (KNQ) is interaction with tRNA. Catalysis depends on Cys201, which acts as the Cysteine persulfide intermediate. Residues 307–308 (RY) form an interaction with tRNA region.

The protein belongs to the MnmA/TRMU family.

Its subcellular location is the cytoplasm. The enzyme catalyses S-sulfanyl-L-cysteinyl-[protein] + uridine(34) in tRNA + AH2 + ATP = 2-thiouridine(34) in tRNA + L-cysteinyl-[protein] + A + AMP + diphosphate + H(+). Catalyzes the 2-thiolation of uridine at the wobble position (U34) of tRNA, leading to the formation of s(2)U34. This chain is tRNA-specific 2-thiouridylase MnmA, found in Leptospira interrogans serogroup Icterohaemorrhagiae serovar Lai (strain 56601).